The chain runs to 680 residues: DNA-directed RNA polymerase subunit beta' (680 aa).

Zn(2+)-binding residues include Cys69, Cys71, Cys87, and Cys90. Mg(2+)-binding residues include Asp489, Asp491, and Asp493.

It belongs to the RNA polymerase beta' chain family. RpoC1 subfamily. In terms of assembly, in plastids the minimal PEP RNA polymerase catalytic core is composed of four subunits: alpha, beta, beta', and beta''. When a (nuclear-encoded) sigma factor is associated with the core the holoenzyme is formed, which can initiate transcription. Mg(2+) serves as cofactor. It depends on Zn(2+) as a cofactor.

Its subcellular location is the plastid. It localises to the chloroplast. The enzyme catalyses RNA(n) + a ribonucleoside 5'-triphosphate = RNA(n+1) + diphosphate. Its function is as follows. DNA-dependent RNA polymerase catalyzes the transcription of DNA into RNA using the four ribonucleoside triphosphates as substrates. The polypeptide is DNA-directed RNA polymerase subunit beta' (Lobularia maritima (Sweet alyssum)).